The sequence spans 228 residues: Pyridoxamine 5'-phosphate oxidase (228 aa).

Residue Gln20–Lys23 participates in pyridoxal 5'-phosphate binding. A Glycyl lysine isopeptide (Lys-Gly) (interchain with G-Cter in ubiquitin) cross-link involves residue Lys29. Arg73–Leu76 serves as a coordination point for FMN. Residue Lys78 participates in pyridoxal 5'-phosphate binding. Residues Tyr88–Ser89, Arg95–Lys96, and Gln118 contribute to the FMN site. Pyridoxal 5'-phosphate is bound by residues Tyr136, Arg140, and Ser144. Residues Gln153–Ser154 and Trp199 contribute to the FMN site. Position 205–207 (Arg205–His207) interacts with pyridoxal 5'-phosphate. Residue Arg209 participates in FMN binding.

Belongs to the pyridoxamine 5'-phosphate oxidase family. As to quaternary structure, homodimer. The cofactor is FMN.

The protein localises to the mitochondrion intermembrane space. The catalysed reaction is pyridoxamine 5'-phosphate + O2 + H2O = pyridoxal 5'-phosphate + H2O2 + NH4(+). It catalyses the reaction pyridoxine 5'-phosphate + O2 = pyridoxal 5'-phosphate + H2O2. The protein operates within cofactor metabolism; pyridoxal 5'-phosphate salvage; pyridoxal 5'-phosphate from pyridoxamine 5'-phosphate: step 1/1. Its pathway is cofactor metabolism; pyridoxal 5'-phosphate salvage; pyridoxal 5'-phosphate from pyridoxine 5'-phosphate: step 1/1. Functionally, catalyzes the oxidation of either pyridoxine 5'-phosphate (PNP) or pyridoxamine 5'-phosphate (PMP) into pyridoxal 5'-phosphate (PLP). In Saccharomyces cerevisiae (strain ATCC 204508 / S288c) (Baker's yeast), this protein is Pyridoxamine 5'-phosphate oxidase (PDX3).